The primary structure comprises 643 residues: Pescadillo homolog (643 aa).

Residues 305 to 323 (EKTKEKNHKSDNNPHEHTT) are compositionally biased toward basic and acidic residues. The disordered stretch occupies residues 305-329 (EKTKEKNHKSDNNPHEHTTNIDNNN). Residues 378–474 (KLKELFKNHI…NILPCSDYLT (97 aa)) enclose the BRCT domain. A coiled-coil region spans residues 531–615 (NYKEEEEEEN…IVLSKKKRKL (85 aa)).

This sequence belongs to the pescadillo family. Interacts with dual specificity protein phosphatase YVH1.

Its subcellular location is the nucleus. It localises to the nucleolus. It is found in the nucleoplasm. In terms of biological role, required for maturation of ribosomal RNAs and formation of the large ribosomal subunit. This is Pescadillo homolog from Plasmodium falciparum (isolate 3D7).